Reading from the N-terminus, the 360-residue chain is Histidinol-phosphate aminotransferase (360 aa).

Residue lysine 211 is modified to N6-(pyridoxal phosphate)lysine.

Belongs to the class-II pyridoxal-phosphate-dependent aminotransferase family. Histidinol-phosphate aminotransferase subfamily. In terms of assembly, homodimer. Pyridoxal 5'-phosphate serves as cofactor.

It carries out the reaction L-histidinol phosphate + 2-oxoglutarate = 3-(imidazol-4-yl)-2-oxopropyl phosphate + L-glutamate. Its pathway is amino-acid biosynthesis; L-histidine biosynthesis; L-histidine from 5-phospho-alpha-D-ribose 1-diphosphate: step 7/9. This Cronobacter sakazakii (strain ATCC BAA-894) (Enterobacter sakazakii) protein is Histidinol-phosphate aminotransferase.